Here is a 296-residue protein sequence, read N- to C-terminus: 4-hydroxybenzoate octaprenyltransferase (296 aa).

Helical transmembrane passes span 22–42 (PIGI…SALG), 46–66 (WIVV…GCVI), 99–121 (LFAG…LVIW), 139–159 (FFAI…PMAY), 163–183 (LGEV…WAVA), 211–231 (FDVA…GGIG), 238–258 (PAFY…YTWI), and 270–290 (FLHN…DFLV).

The protein belongs to the UbiA prenyltransferase family. It depends on Mg(2+) as a cofactor.

It localises to the cell inner membrane. The catalysed reaction is all-trans-octaprenyl diphosphate + 4-hydroxybenzoate = 4-hydroxy-3-(all-trans-octaprenyl)benzoate + diphosphate. It functions in the pathway cofactor biosynthesis; ubiquinone biosynthesis. Functionally, catalyzes the prenylation of para-hydroxybenzoate (PHB) with an all-trans polyprenyl group. Mediates the second step in the final reaction sequence of ubiquinone-8 (UQ-8) biosynthesis, which is the condensation of the polyisoprenoid side chain with PHB, generating the first membrane-bound Q intermediate 3-octaprenyl-4-hydroxybenzoate. This chain is 4-hydroxybenzoate octaprenyltransferase, found in Dechloromonas aromatica (strain RCB).